A 196-amino-acid polypeptide reads, in one-letter code: MYRKSIMQESRDIQLAMELIALGARLPILENETCLSRSRLLRLYKEVKGTPAPKGLLPFSADWFLSWEQNIHSSAFYNAYLCLIRVGNIPTIEAMIKAYRLYLELCPQRQDGGPLLGLTRAWILLRFIDSQLLGQTRCKLCGGAFITYAFHPPHNFVCSFCHPPSRAVKKRKLSHAAADNRIYNLRQRNMCNVKPC.

Zn(2+)-binding residues include Cys138, Cys141, Cys158, and Cys161.

This sequence belongs to the FlhC family. Heterohexamer composed of two FlhC and four FlhD subunits. Each FlhC binds a FlhD dimer, forming a heterotrimer, and a hexamer assembles by dimerization of two heterotrimers. The cofactor is Zn(2+).

It localises to the cytoplasm. Functionally, functions in complex with FlhD as a master transcriptional regulator that regulates transcription of several flagellar and non-flagellar operons by binding to their promoter region. Activates expression of class 2 flagellar genes, including fliA, which is a flagellum-specific sigma factor that turns on the class 3 genes. Also regulates genes whose products function in a variety of physiological pathways. In Sodalis glossinidius (strain morsitans), this protein is Flagellar transcriptional regulator FlhC.